The following is a 1495-amino-acid chain: DNA-directed RNA polymerase subunit 1 (1495 aa).

This sequence belongs to the RNA polymerase beta' chain family.

The protein resides in the virion. The enzyme catalyses RNA(n) + a ribonucleoside 5'-triphosphate = RNA(n+1) + diphosphate. In terms of biological role, DNA-dependent RNA polymerase catalyzes the transcription of DNA into RNA using the four ribonucleoside triphosphates as substrates. The chain is DNA-directed RNA polymerase subunit 1 (RPO1) from Acanthamoeba polyphaga (Amoeba).